The primary structure comprises 365 residues: tRNA/tmRNA (uracil-C(5))-methyltransferase (365 aa).

S-adenosyl-L-methionine-binding residues include glutamine 189, tyrosine 217, asparagine 222, glutamate 238, and aspartate 298. The active-site Nucleophile is the cysteine 323. Glutamate 357 (proton acceptor) is an active-site residue.

This sequence belongs to the class I-like SAM-binding methyltransferase superfamily. RNA M5U methyltransferase family. TrmA subfamily.

It carries out the reaction uridine(54) in tRNA + S-adenosyl-L-methionine = 5-methyluridine(54) in tRNA + S-adenosyl-L-homocysteine + H(+). It catalyses the reaction uridine(341) in tmRNA + S-adenosyl-L-methionine = 5-methyluridine(341) in tmRNA + S-adenosyl-L-homocysteine + H(+). In terms of biological role, dual-specificity methyltransferase that catalyzes the formation of 5-methyluridine at position 54 (m5U54) in all tRNAs, and that of position 341 (m5U341) in tmRNA (transfer-mRNA). The sequence is that of tRNA/tmRNA (uracil-C(5))-methyltransferase from Shewanella sediminis (strain HAW-EB3).